We begin with the raw amino-acid sequence, 233 residues long: Ribulose-phosphate 3-epimerase (233 aa).

Ser-16 lines the substrate pocket. Residues His-41, Asp-43, and His-74 each contribute to the a divalent metal cation site. Asp-43 serves as the catalytic Proton acceptor. Substrate-binding positions include His-74, 150 to 153, 185 to 187, and 207 to 208; these read GFCG, DGG, and AS. Asp-185 is a binding site for a divalent metal cation. The active-site Proton donor is the Asp-185.

The protein belongs to the ribulose-phosphate 3-epimerase family. A divalent metal cation is required as a cofactor.

It catalyses the reaction D-ribulose 5-phosphate = D-xylulose 5-phosphate. The protein operates within carbohydrate degradation. Catalyzes the reversible epimerization of D-ribulose 5-phosphate to D-xylulose 5-phosphate. In Chlamydia trachomatis serovar D (strain ATCC VR-885 / DSM 19411 / UW-3/Cx), this protein is Ribulose-phosphate 3-epimerase.